A 27-amino-acid polypeptide reads, in one-letter code: Cruzioseptin-14 (27 aa).

In terms of tissue distribution, expressed by the skin glands.

It localises to the secreted. Has antimicrobial activity. The protein is Cruzioseptin-14 of Cruziohyla calcarifer (Splendid leaf frog).